Reading from the N-terminus, the 263-residue chain is Endonuclease 8 (263 aa).

The active-site Schiff-base intermediate with DNA is Pro-2. Residue Glu-3 is the Proton donor of the active site. Catalysis depends on Lys-53, which acts as the Proton donor; for beta-elimination activity. DNA is bound by residues Gln-70, Arg-125, and Asn-169. The FPG-type zinc-finger motif lies at 229–263 (KVFHRDGELCERCGGIIEKTTLSSRPFYWCPGCQH). Residue Arg-253 is the Proton donor; for delta-elimination activity of the active site.

This sequence belongs to the FPG family. The cofactor is Zn(2+).

It carries out the reaction 2'-deoxyribonucleotide-(2'-deoxyribose 5'-phosphate)-2'-deoxyribonucleotide-DNA = a 3'-end 2'-deoxyribonucleotide-(2,3-dehydro-2,3-deoxyribose 5'-phosphate)-DNA + a 5'-end 5'-phospho-2'-deoxyribonucleoside-DNA + H(+). Its function is as follows. Involved in base excision repair of DNA damaged by oxidation or by mutagenic agents. Acts as a DNA glycosylase that recognizes and removes damaged bases. Has a preference for oxidized pyrimidines, such as thymine glycol, 5,6-dihydrouracil and 5,6-dihydrothymine. Has AP (apurinic/apyrimidinic) lyase activity and introduces nicks in the DNA strand. Cleaves the DNA backbone by beta-delta elimination to generate a single-strand break at the site of the removed base with both 3'- and 5'-phosphates. The sequence is that of Endonuclease 8 from Escherichia coli (strain 55989 / EAEC).